The following is a 787-amino-acid chain: Protein translocase subunit SecA (787 aa).

ATP-binding positions include glutamine 85, 103 to 107 (GEGKT), and aspartate 492.

This sequence belongs to the SecA family. In terms of assembly, monomer and homodimer. Part of the essential Sec protein translocation apparatus which comprises SecA, SecYEG and auxiliary proteins SecDF. Other proteins may also be involved.

The protein localises to the cell membrane. It localises to the cytoplasm. It catalyses the reaction ATP + H2O + cellular proteinSide 1 = ADP + phosphate + cellular proteinSide 2.. In terms of biological role, part of the Sec protein translocase complex. Interacts with the SecYEG preprotein conducting channel. Has a central role in coupling the hydrolysis of ATP to the transfer of proteins into and across the cell membrane, serving as an ATP-driven molecular motor driving the stepwise translocation of polypeptide chains across the membrane. The polypeptide is Protein translocase subunit SecA (Limosilactobacillus reuteri (strain DSM 20016) (Lactobacillus reuteri)).